A 492-amino-acid polypeptide reads, in one-letter code: Cysteine--tRNA ligase (492 aa).

Position 27 (C27) interacts with Zn(2+). Residues 29 to 39 (VTVYDLCHLGH) carry the 'HIGH' region motif. Positions 211, 236, and 240 each coordinate Zn(2+). The 'KMSKS' region motif lies at 268-272 (KMSKS). Position 271 (K271) interacts with ATP.

It belongs to the class-I aminoacyl-tRNA synthetase family. As to quaternary structure, monomer. Zn(2+) serves as cofactor.

The protein localises to the cytoplasm. The enzyme catalyses tRNA(Cys) + L-cysteine + ATP = L-cysteinyl-tRNA(Cys) + AMP + diphosphate. In Prochlorococcus marinus (strain MIT 9515), this protein is Cysteine--tRNA ligase.